We begin with the raw amino-acid sequence, 1733 residues long: Collagen alpha-1(XXIV) chain (1733 aa).

The N-terminal stretch at 1-35 is a signal peptide; it reads MHLGAYRTRHGKVSPTTETKLFLRFIVLCVVWISV. The Laminin G-like domain maps to 102-229; it reads ISLRQPLTVL…TVCQLEIMPS (128 aa). N-linked (GlcNAc...) asparagine glycosylation occurs at Asn157. The disordered stretch occupies residues 257 to 335; it reads PHTAGMPTRH…SQEHQTPRAQ (79 aa). Residues 312 to 324 are compositionally biased toward polar residues; that stretch reads IPNNRSNGSATVH. N-linked (GlcNAc...) asparagine glycosylation is found at Asn366, Asn396, and Asn448. Residues 505-1499 form a disordered region; it reads YLRGPKGDPG…GPPGAPGPRR (995 aa). 15 Collagen-like domains span residues 506-561, 577-636, 679-738, 742-801, 802-861, 886-945, 946-1005, 1006-1065, 1072-1131, 1135-1189, 1191-1215, 1220-1279, 1316-1375, 1376-1435, and 1439-1498; these read LRGP…PGLS, GLVG…KGVR, GPAG…KGEQ, GEPG…PGQN, GPEG…KGEV, GSIG…KGQR, GPRG…SGDV, GPAG…PGPR, GEEG…PGQR, GKKG…GIPG, RGHQ…PGED, GPPG…KGER, GVDG…KGEQ, GLPG…AGIV, and GPKG…PGPR. A compositionally biased stretch (pro residues) spans 512–524; the sequence is DPGPPGPPGPMGI. Composition is skewed to low complexity over residues 573–599 and 699–708; these read PGLL…LPGL and PGVTGSVGPA. Pro residues predominate over residues 776-789; sequence DPGPQGPSGPPGPE. Residues 912-921 are compositionally biased toward pro residues; sequence PGPPGAPGPM. The segment covering 923-944 has biased composition (low complexity); it reads PLGLPGLVGARGAPGSPGPKGQ. Gly residues predominate over residues 1045–1054; sequence GAKGDGGPAG. A compositionally biased stretch (low complexity) spans 1056–1074; it reads AGATGEPGPRGEPGAPGEE. Gly residues predominate over residues 1084–1093; it reads GAPGGSGLPG. Positions 1175–1205 are enriched in low complexity; sequence PLGLMGPEGEPGIPGYRGHQGQPGPSGLPGP. The span at 1237-1246 shows a compositional bias: basic and acidic residues; that stretch reads TGEHGEEGYK. A compositionally biased stretch (low complexity) spans 1323–1339; the sequence is YPGKPGLPGKQGLLGVP. The segment covering 1352-1361 has biased composition (gly residues); the sequence is GPQGGKGASG. Low complexity-rich tracts occupy residues 1371–1386 and 1434–1444; these read PKGE…VPGQ and IVGIVGPKGPI. The span at 1485 to 1495 shows a compositional bias: pro residues; it reads QPGPPGPPGAP. One can recognise a Fibrillar collagen NC1 domain in the interval 1534–1733; sequence SDIFKTLTYL…YIESNSVCFL (200 aa).

It belongs to the fibrillar collagen family. As to expression, expressed in skeleton. Found at ossification centers of the craniofacial, axial and appendicular skeleton. Also expressed in retina and to a lower extent in cornea, skin and tendon.

It localises to the secreted. It is found in the extracellular space. The protein localises to the extracellular matrix. Involved in osteoblast differentiation. The chain is Collagen alpha-1(XXIV) chain (Col24a1) from Mus musculus (Mouse).